The following is a 641-amino-acid chain: Raffinose carrier protein (641 aa).

The permease stretch occupies residues 1–506; the sequence is MQEEHNYKWV…GQVIPLAQVN (506 aa). 12 helical membrane-spanning segments follow: residues 25 to 45, 57 to 77, 93 to 113, 120 to 140, 168 to 188, 201 to 221, 253 to 273, 288 to 308, 317 to 337, 342 to 362, 394 to 414, and 429 to 449; these read AFYSILSGYLIIFITSHLFDT, LVTLIIMVLRIVELFIDPFIG, WVVVGGTVSSIILLLLFTNLG, AMIYLVVFAILYITMDIFYSF, LGSTIGGGLVGVLVMPAVIFF, WFIFALIICLIALISAWGVGL, LLWAALAYLFYGVGINILGSL, FSILSIINIFLGLIATSLFPV, GVFAGCLVFMLGGIAIFTIAG, LVLLAATMFGFPQQMVFLVVL, FGGAISNGVVGQIAIISGMTT, and FKLTMFAFPALMLLIAIGIFS. Positions 507–611 constitute a PTS EIIA type-1 domain; sequence DPTFAAGTLG…DDTVIMTVTN (105 aa). His-559 carries the phosphohistidine; by HPr modification.

In the N-terminal section; belongs to the sodium:galactoside symporter (TC 2.A.2) family.

Its subcellular location is the cell membrane. This is Raffinose carrier protein (rafP) from Pediococcus pentosaceus.